The chain runs to 360 residues: MKNNYTSLKSSMDEGDELKTGHEFDLEKGILPEYNSEEEGALPPYSDISKLANPVPEDSSTGPTETTNPNVERRQEFKDSHPNIYSLLRLLISVLAVIVVFFTAWVCVNPLEKSIFGKVAFSVTIGITCPIVFIAIFCFFETWTQAVAQCIKVTVIFLAQCVKVTVISLAKCVKVIAVGLYNSKKDLVVTIWLAWVVICFILFGCVKDGRLNLNKALICSTSSISAALFFILLLVCIPIWTLKHMLFGLFQVLGVQSCVVIVTKGLMYLLDKHIDATGYEIEASSLFVIGNFLFFYEMERPGALKRMPKFIGNGIASFLGGIANAIRGIANAIGGIANAFRGANDNNDIPLGEMDVESEV.

Composition is skewed to polar residues over residues 1–10 and 58–70; these read MKNNYTSLKS and DSST…TNPN. Disordered regions lie at residues 1-20 and 37-75; these read MKNN…ELKT and EEEG…ERRQ. 8 consecutive transmembrane segments (helical) span residues 90–110, 120–140, 150–170, 186–206, 222–242, 246–266, 276–296, and 310–330; these read LLIS…CVNP, AFSV…FCFF, CIKV…ISLA, DLVV…FGCV, SSIS…IWTL, LFGL…TKGL, ATGY…LFFY, and FIGN…RGIA.

This sequence belongs to the WTF family. As to quaternary structure, homomer. Interacts with other proteins that exhibit high sequence similarity.

Its subcellular location is the spore membrane. The protein localises to the vacuole membrane. Acts as a suppressor component of the dual wtf meiotic drive system, and can suppress but not confer meiotic drive by compatible poisons. Wtf meiotic drive systems promote unequal transmission of alleles from the parental zygote to progeny spores by encoding a poison and an antidote from the same locus; the poison is trans-acting and forms toxic aggregates in all spores within an ascus, wherease the antidote is spore-specific and targets aggregates for degradation by the vacuole. Meiotic drive by wtf systems therefore lead to poisoning of all progeny that do not inherit the dual poison/antidote allele, or express a compatible antidote. The chain is Meiotic drive suppressor wtf13 from Schizosaccharomyces kambucha (Fission yeast).